The chain runs to 805 residues: Transducer protein BasT (805 aa).

2 helical membrane passes run 25-45 (FNVLLLVVVIIVAAAGGYIHL) and 296-316 (NLAGLVVVALVGLLLVGLTVG). HAMP domains are found at residues 317 to 370 (RRTS…TAAS) and 437 to 490 (ERLE…ATLA). The Methyl-accepting transducer domain maps to 509-745 (SAAEIRSASD…EVVTMIDEVT (237 aa)). Positions 513–532 (IRSASDQVSESVQDISADAD) are disordered. Polar residues predominate over residues 516–526 (ASDQVSESVQD). Residues glutamate 554, glutamate 736, and glutamate 763 each carry the glutamate methyl ester (Glu) modification. Residues 752–779 (ATESQQVSAAAEEQAASVSEVAGRADDL) are disordered. Residues 754 to 773 (ESQQVSAAAEEQAASVSEVA) show a composition bias toward low complexity.

It belongs to the methyl-accepting chemotaxis (MCP) protein family. As to quaternary structure, interacts with CheA, CheY, CheW1 and CheW2. Post-translationally, methylated by CheR.

The protein resides in the cell membrane. Mediates chemotaxis towards five attractant amino acids (leucine, isoleucine, valine, methionine and cysteine). Probably transduces the signal from the substrate-binding protein BasB to the histidine kinase CheA. This Halobacterium salinarum (strain ATCC 29341 / DSM 671 / R1) protein is Transducer protein BasT (basT).